The following is a 506-amino-acid chain: Exopolyphosphatase (506 aa).

The protein belongs to the GppA/Ppx family. Homodimer. Requires Mg(2+) as cofactor.

It is found in the cell membrane. The catalysed reaction is [phosphate](n) + H2O = [phosphate](n-1) + phosphate + H(+). It carries out the reaction [phosphate](n) + ATP = [phosphate](n+1) + ADP. Exopolyphosphatase activity is stimulated by NH(4)(+) and K(+). Phosphotransferase activity is insensitive to the addition of K(+) or NH(4)(+) ions. Its function is as follows. Degradation of inorganic polyphosphates (polyP). Releases orthophosphate processively from the ends of the polyP chain. Also has polyphosphate:ADP phosphotransferase activity, catalyzing the production of ATP from ADP and polyP. The chain is Exopolyphosphatase from Pseudomonas aeruginosa (strain ATCC 15692 / DSM 22644 / CIP 104116 / JCM 14847 / LMG 12228 / 1C / PRS 101 / PAO1).